A 241-amino-acid polypeptide reads, in one-letter code: MIEWREEGVLLSVRPHGETSVIVEAFTRAHGRHLGVVRGGVSRKLAPVLQPGAQLDLRWKARLEDHMGAFTVEPVRGRAAAVLGDRLALSAMSSALALARFSLAERAAYPGFYDQTVALLDALAEGTGWLPAYLDWEMALLDQMGFGLDLSGCAVRGVNEDLAFVSPRTGRAVSRQAAGAWVDRLLPLPEVMLGGPAHLHGVLEGLTTTGHFLEHKLAPALGNRPPPEARARFIDVLSRAR.

This sequence belongs to the RecO family.

Functionally, involved in DNA repair and RecF pathway recombination. This is DNA repair protein RecO from Dinoroseobacter shibae (strain DSM 16493 / NCIMB 14021 / DFL 12).